A 176-amino-acid polypeptide reads, in one-letter code: ATP synthase subunit b 2 (176 aa).

The helical transmembrane segment at 29–49 (IFWLVITLVIIYMVLSKVALP) threads the bilayer.

It belongs to the ATPase B chain family. In terms of assembly, F-type ATPases have 2 components, F(1) - the catalytic core - and F(0) - the membrane proton channel. F(1) has five subunits: alpha(3), beta(3), gamma(1), delta(1), epsilon(1). F(0) has three main subunits: a(1), b(2) and c(10-14). The alpha and beta chains form an alternating ring which encloses part of the gamma chain. F(1) is attached to F(0) by a central stalk formed by the gamma and epsilon chains, while a peripheral stalk is formed by the delta and b chains.

The protein resides in the cell inner membrane. Functionally, f(1)F(0) ATP synthase produces ATP from ADP in the presence of a proton or sodium gradient. F-type ATPases consist of two structural domains, F(1) containing the extramembraneous catalytic core and F(0) containing the membrane proton channel, linked together by a central stalk and a peripheral stalk. During catalysis, ATP synthesis in the catalytic domain of F(1) is coupled via a rotary mechanism of the central stalk subunits to proton translocation. In terms of biological role, component of the F(0) channel, it forms part of the peripheral stalk, linking F(1) to F(0). The b'-subunit is a diverged and duplicated form of b found in plants and photosynthetic bacteria. This chain is ATP synthase subunit b 2 (atpF2), found in Roseobacter denitrificans (strain ATCC 33942 / OCh 114) (Erythrobacter sp. (strain OCh 114)).